Consider the following 163-residue polypeptide: Nucleotide-binding protein KPN78578_03700 (163 aa).

This sequence belongs to the YajQ family.

Functionally, nucleotide-binding protein. In Klebsiella pneumoniae subsp. pneumoniae (strain ATCC 700721 / MGH 78578), this protein is Nucleotide-binding protein KPN78578_03700.